The primary structure comprises 494 residues: Alpha-amylase-related protein (494 aa).

An N-terminal signal peptide occupies residues 1 to 20 (MFKFATAVILCLVAASSTLA). A Pyrrolidone carboxylic acid modification is found at Gln21. A disulfide bridge connects residues Cys48 and Cys104. Ca(2+) is bound by residues Asn118, Gln169, and Asp178. Cysteines 157 and 171 form a disulfide. Position 206 (Arg206) interacts with chloride. Asp208 (nucleophile) is an active-site residue. His212 provides a ligand contact to Ca(2+). Catalysis depends on Glu245, which acts as the Proton donor. Residues Asn308 and Arg343 each coordinate chloride. Intrachain disulfides connect Cys376–Cys382, Cys418–Cys441, and Cys448–Cys460.

This sequence belongs to the glycosyl hydrolase 13 family. In terms of assembly, monomer. Requires Ca(2+) as cofactor. Chloride is required as a cofactor.

It localises to the secreted. It catalyses the reaction Endohydrolysis of (1-&gt;4)-alpha-D-glucosidic linkages in polysaccharides containing three or more (1-&gt;4)-alpha-linked D-glucose units.. This chain is Alpha-amylase-related protein (Amyrel), found in Drosophila bipectinata (Fruit fly).